The sequence spans 608 residues: Elongation factor 4 (608 aa).

Residues 11–193 (KKIRNFSIIA…QIVEKVPEPS (183 aa)) form the tr-type G domain. GTP is bound by residues 23 to 28 (DHGKST) and 140 to 143 (NKID).

This sequence belongs to the TRAFAC class translation factor GTPase superfamily. Classic translation factor GTPase family. LepA subfamily.

It is found in the cell membrane. It catalyses the reaction GTP + H2O = GDP + phosphate + H(+). Its function is as follows. Required for accurate and efficient protein synthesis under certain stress conditions. May act as a fidelity factor of the translation reaction, by catalyzing a one-codon backward translocation of tRNAs on improperly translocated ribosomes. Back-translocation proceeds from a post-translocation (POST) complex to a pre-translocation (PRE) complex, thus giving elongation factor G a second chance to translocate the tRNAs correctly. Binds to ribosomes in a GTP-dependent manner. The chain is Elongation factor 4 from Listeria welshimeri serovar 6b (strain ATCC 35897 / DSM 20650 / CCUG 15529 / CIP 8149 / NCTC 11857 / SLCC 5334 / V8).